A 48-amino-acid chain; its full sequence is Fimbrial assembly protein, serogroup F1 (48 aa).

This is Fimbrial assembly protein, serogroup F1 (fimB) from Dichelobacter nodosus (Bacteroides nodosus).